A 96-amino-acid polypeptide reads, in one-letter code: Large ribosomal subunit protein bL27 (96 aa).

Residues 1 to 9 (MLRLDLQFF) constitute a propeptide that is removed on maturation. The tract at residues 14-35 (GVGSTKNGRDSQSKRLGAKRAD) is disordered.

It belongs to the bacterial ribosomal protein bL27 family. In terms of processing, the N-terminus is cleaved by ribosomal processing cysteine protease Prp.

This Bacillus cytotoxicus (strain DSM 22905 / CIP 110041 / 391-98 / NVH 391-98) protein is Large ribosomal subunit protein bL27.